A 58-amino-acid chain; its full sequence is Large ribosomal subunit protein eL20 (58 aa).

Residues 37–58 (TTVGSQHNRKRPQIEIKEVSAA) form a disordered region. The segment covering 48–58 (PQIEIKEVSAA) has biased composition (basic and acidic residues).

It belongs to the eukaryotic ribosomal protein eL20 family. As to quaternary structure, part of the 50S ribosomal subunit. Binds 23S rRNA.

The polypeptide is Large ribosomal subunit protein eL20 (Halorubrum lacusprofundi (strain ATCC 49239 / DSM 5036 / JCM 8891 / ACAM 34)).